A 548-amino-acid polypeptide reads, in one-letter code: Guanine nucleotide-binding protein-like 3 (548 aa).

Over residues 1 to 45 the composition is skewed to basic residues; sequence MKRPKLKKGSKRLSCHKRYKIQKKVREHNRKARKEAKKSGTRKQK. The segment at 1–118 is disordered; that stretch reads MKRPKLKKGS…KKNKGTKAAE (118 aa). Residues 58–114 adopt a coiled-coil conformation; the sequence is AEILQEAQRRRQQEEELKQNRKLERQKEVAKRRKLDEKKKKNSEKREKRDNKKNKGT. Residues 64 to 107 show a composition bias toward basic and acidic residues; that stretch reads AQRRRQQEEELKQNRKLERQKEVAKRRKLDEKKKKNSEKREKRD. Residues 125–305 enclose the CP-type G domain; the sequence is CRHVNKVLEQ…MLDSPALVVS (181 aa). Residues 172 to 175, 256 to 263, and 298 to 301 contribute to the GTP site; these read NKAD, ANVGKSSV, and DSPA. The interval 459–548 is disordered; that stretch reads RQLVEPEPIE…DAYDFNTDFV (90 aa). Residues 465 to 497 show a composition bias toward acidic residues; sequence EPIEEELEANDGEEDVEEEHEGSEEEEDEEVEQ. Basic and acidic residues predominate over residues 501–523; it reads SAKEQEVVSAKEQEVVSAKEQDS. The span at 524 to 534 shows a compositional bias: polar residues; sequence KSAGPSVSFDQ.

It belongs to the TRAFAC class YlqF/YawG GTPase family.

Its subcellular location is the nucleus. The protein resides in the nucleolus. May play a role in regulating cellular proliferation. The polypeptide is Guanine nucleotide-binding protein-like 3 (gnl3) (Xenopus tropicalis (Western clawed frog)).